The following is a 474-amino-acid chain: Dihydrolipoyl dehydrogenase (474 aa).

FAD is bound by residues 34–51, K60, and G124; that span reads EGNPYDDPKGEARLGGTC. C51 and C56 form a disulfide bridge. NAD(+)-binding positions include 189–193, E212, V246, and 278–281; these read GAGVI and SVGR. D321 and A329 together coordinate FAD. H453 functions as the Proton acceptor in the catalytic mechanism.

Belongs to the class-I pyridine nucleotide-disulfide oxidoreductase family. It depends on FAD as a cofactor.

The protein resides in the cytoplasm. It carries out the reaction N(6)-[(R)-dihydrolipoyl]-L-lysyl-[protein] + NAD(+) = N(6)-[(R)-lipoyl]-L-lysyl-[protein] + NADH + H(+). The branched-chain alpha-keto dehydrogenase complex catalyzes the overall conversion of alpha-keto acids to acyl-CoA and CO(2). It contains multiple copies of 3 enzymatic components: branched-chain alpha-keto acid decarboxylase (E1), lipoamide acyltransferase (E2) and lipoamide dehydrogenase (E3). In Cupriavidus necator (strain ATCC 17699 / DSM 428 / KCTC 22496 / NCIMB 10442 / H16 / Stanier 337) (Ralstonia eutropha), this protein is Dihydrolipoyl dehydrogenase (odhL).